The chain runs to 352 residues: Fe(3+) ions import ATP-binding protein FbpC (352 aa).

In terms of domain architecture, ABC transporter spans 5–239 (LHIGHLSKSF…PADLDAALFI (235 aa)). ATP is bound at residue 37-44 (GASGCGKT).

It belongs to the ABC transporter superfamily. Fe(3+) ion importer (TC 3.A.1.10) family. As to quaternary structure, the complex is composed of two ATP-binding proteins (FbpC), two transmembrane proteins (FbpB) and a solute-binding protein (FbpA).

The protein localises to the cell inner membrane. It carries out the reaction Fe(3+)(out) + ATP + H2O = Fe(3+)(in) + ADP + phosphate + H(+). Functionally, part of the ABC transporter complex FbpABC involved in Fe(3+) ions import. Responsible for energy coupling to the transport system. The sequence is that of Fe(3+) ions import ATP-binding protein FbpC from Neisseria gonorrhoeae (strain ATCC 700825 / FA 1090).